A 276-amino-acid chain; its full sequence is Putative glycosyltransferase 6 domain-containing protein 1 (276 aa).

Residues 1-6 (MNSKRM) are Cytoplasmic-facing. The chain crosses the membrane as a helical; Signal-anchor for type II membrane protein span at residues 7–23 (LLLVLFAFSLMLVERYF). Over 24–276 (RNHQVEELRL…NKYFYLNKPT (253 aa)) the chain is Lumenal. N-linked (GlcNAc...) asparagine glycosylation is present at asparagine 74. Substrate-binding positions include 82-87 (FATGRF), 173-175 (AAN), and 195-198 (HAWW). Catalysis depends on glutamate 263, which acts as the Nucleophile.

It belongs to the glycosyltransferase 6 family. Mn(2+) is required as a cofactor. Expressed in both healthy and inflamed gingival tissue samples at similar levels, with higher expression in the gingival connective tissue compared to gingival epithelium. Strongest expression in testis, followed by leukocytes.

Its subcellular location is the membrane. The protein is Putative glycosyltransferase 6 domain-containing protein 1 (GLT6D1) of Homo sapiens (Human).